The following is a 459-amino-acid chain: Methylenetetrahydrofolate--tRNA-(uracil-5-)-methyltransferase TrmFO (459 aa).

11 to 16 (GAGLAG) lines the FAD pocket.

The protein belongs to the MnmG family. TrmFO subfamily. It depends on FAD as a cofactor.

It localises to the cytoplasm. It catalyses the reaction uridine(54) in tRNA + (6R)-5,10-methylene-5,6,7,8-tetrahydrofolate + NADH + H(+) = 5-methyluridine(54) in tRNA + (6S)-5,6,7,8-tetrahydrofolate + NAD(+). It carries out the reaction uridine(54) in tRNA + (6R)-5,10-methylene-5,6,7,8-tetrahydrofolate + NADPH + H(+) = 5-methyluridine(54) in tRNA + (6S)-5,6,7,8-tetrahydrofolate + NADP(+). Its function is as follows. Catalyzes the folate-dependent formation of 5-methyl-uridine at position 54 (M-5-U54) in all tRNAs. The chain is Methylenetetrahydrofolate--tRNA-(uracil-5-)-methyltransferase TrmFO from Synechococcus sp. (strain CC9311).